A 613-amino-acid chain; its full sequence is Dihydroxy-acid dehydratase (613 aa).

Asp-81 is a binding site for Mg(2+). Cys-122 lines the [2Fe-2S] cluster pocket. Mg(2+) contacts are provided by Asp-123 and Lys-124. Lys-124 bears the N6-carboxylysine mark. Cys-195 lines the [2Fe-2S] cluster pocket. Glu-491 is a binding site for Mg(2+). Ser-517 functions as the Proton acceptor in the catalytic mechanism.

It belongs to the IlvD/Edd family. As to quaternary structure, homodimer. Requires [2Fe-2S] cluster as cofactor. Mg(2+) is required as a cofactor.

It carries out the reaction (2R)-2,3-dihydroxy-3-methylbutanoate = 3-methyl-2-oxobutanoate + H2O. It catalyses the reaction (2R,3R)-2,3-dihydroxy-3-methylpentanoate = (S)-3-methyl-2-oxopentanoate + H2O. The protein operates within amino-acid biosynthesis; L-isoleucine biosynthesis; L-isoleucine from 2-oxobutanoate: step 3/4. It functions in the pathway amino-acid biosynthesis; L-valine biosynthesis; L-valine from pyruvate: step 3/4. Its function is as follows. Functions in the biosynthesis of branched-chain amino acids. Catalyzes the dehydration of (2R,3R)-2,3-dihydroxy-3-methylpentanoate (2,3-dihydroxy-3-methylvalerate) into 2-oxo-3-methylpentanoate (2-oxo-3-methylvalerate) and of (2R)-2,3-dihydroxy-3-methylbutanoate (2,3-dihydroxyisovalerate) into 2-oxo-3-methylbutanoate (2-oxoisovalerate), the penultimate precursor to L-isoleucine and L-valine, respectively. The sequence is that of Dihydroxy-acid dehydratase from Aliivibrio fischeri (strain ATCC 700601 / ES114) (Vibrio fischeri).